The sequence spans 233 residues: Large ribosomal subunit protein eL6y (233 aa).

A compositionally biased stretch (basic and acidic residues) spans 48-72 (HDAKSKVDAPVEKPPKFYPAEDVKK). The tract at residues 48–82 (HDAKSKVDAPVEKPPKFYPAEDVKKPLPNRRTAKP) is disordered.

The protein belongs to the eukaryotic ribosomal protein eL6 family.

The protein is Large ribosomal subunit protein eL6y (RPL6B) of Arabidopsis thaliana (Mouse-ear cress).